Here is a 336-residue protein sequence, read N- to C-terminus: Ketol-acid reductoisomerase (NADP(+)) (336 aa).

The KARI N-terminal Rossmann domain maps to 5–185 (SKIYTDKDSN…GATRAGVIPT (181 aa)). NADP(+) is bound by residues 28 to 31 (YGSQ), S56, and 86 to 89 (DMVQ). The active site involves H111. Residue G137 coordinates NADP(+). Residues 186-331 (TFKEETETDL…NQLKDLIQKG (146 aa)) enclose the KARI C-terminal knotted domain. D194, E198, E230, and E234 together coordinate Mg(2+). A substrate-binding site is contributed by S255.

It belongs to the ketol-acid reductoisomerase family. Mg(2+) serves as cofactor.

It carries out the reaction (2R)-2,3-dihydroxy-3-methylbutanoate + NADP(+) = (2S)-2-acetolactate + NADPH + H(+). It catalyses the reaction (2R,3R)-2,3-dihydroxy-3-methylpentanoate + NADP(+) = (S)-2-ethyl-2-hydroxy-3-oxobutanoate + NADPH + H(+). The protein operates within amino-acid biosynthesis; L-isoleucine biosynthesis; L-isoleucine from 2-oxobutanoate: step 2/4. It participates in amino-acid biosynthesis; L-valine biosynthesis; L-valine from pyruvate: step 2/4. Involved in the biosynthesis of branched-chain amino acids (BCAA). Catalyzes an alkyl-migration followed by a ketol-acid reduction of (S)-2-acetolactate (S2AL) to yield (R)-2,3-dihydroxy-isovalerate. In the isomerase reaction, S2AL is rearranged via a Mg-dependent methyl migration to produce 3-hydroxy-3-methyl-2-ketobutyrate (HMKB). In the reductase reaction, this 2-ketoacid undergoes a metal-dependent reduction by NADPH to yield (R)-2,3-dihydroxy-isovalerate. The protein is Ketol-acid reductoisomerase (NADP(+)) of Saccharolobus islandicus (strain Y.N.15.51 / Yellowstone #2) (Sulfolobus islandicus).